Consider the following 516-residue polypeptide: rRNA N(6)-adenosine-methyltransferase ZCCHC4 (516 aa).

Zn(2+)-binding residues include Cys40, His42, Cys66, Cys75, Cys127, Cys130, His142, and His145. A GRF-type zinc finger spans residues 40-84 (CPHELGPTLLFVKVNQGKEETRRFYACSACRDRKDCNFFQWEDEK). S-adenosyl-L-methionine-binding positions include 174-177 (QYLF), Arg204, Asp227, 245-246 (NM), and Asp278. The regulatory loop stretch occupies residues 339-360 (QVVDYDNHALYKHGKTGRKQSP). Zn(2+) is bound by residues Cys383, Cys386, His396, Cys397, Cys400, Cys403, His413, Cys414, Cys417, Cys420, His427, Cys428, Cys431, Cys434, His439, and Cys441. Positions 398 to 448 (EHCNSCTSKDGRKWNHCFLCKKCVKPSWIHCSICNHCALPDHSCKGPKDGC) constitute a DHHC domain. A CCHC-type zinc finger spans residues 446 to 463 (DGCFICGELDHKRSACPN). A compositionally biased stretch (basic residues) spans 472-484 (KAVRKQKQRKSNK). The tract at residues 472–516 (KAVRKQKQRKSNKMKMETTKGQSMNHTSATRKKKRRERTHQYLCS) is disordered. Positions 490–499 (TKGQSMNHTS) are enriched in polar residues. The segment covering 500-509 (ATRKKKRRER) has biased composition (basic residues).

This sequence belongs to the ZCCHC4 family. In terms of assembly, interacts with components of the ASC-1 complex TRIP4, ASCC1, ASCC2 and ASCC3. Interact with AHCYL1 and AHCYL2. Interact with YTHDC2.

Its subcellular location is the cytoplasm. It localises to the nucleus. The protein localises to the nucleolus. The enzyme catalyses adenosine(4220) in 28S rRNA + S-adenosyl-L-methionine = N(6)-methyladenosine(4220) in 28S rRNA + S-adenosyl-L-homocysteine + H(+). RRNA N6-methyltransferase that specifically methylates the adenine in position 4220 of 28S rRNA. N6-methylation of adenine(4220) in 28S rRNA is required for translation. In Bos taurus (Bovine), this protein is rRNA N(6)-adenosine-methyltransferase ZCCHC4.